A 260-amino-acid polypeptide reads, in one-letter code: Methionine-rich nacre protein (260 aa).

The signal sequence occupies residues 1-19 (MRRILCLAVVIFIINDVSS). Residues 23–75 (GSNKNWKKSGMSLSSPGNKKPTGNNNAVPQKSKMNNVNQNSLSQPKRPSHPGN) form a disordered region. The segment covering 33–68 (MSLSSPGNKKPTGNNNAVPQKSKMNNVNQNSLSQPK) has biased composition (polar residues).

As to expression, expressed in mantle distal zone, mantle margin and grafted pearl pockets. Not expressed in adductor muscle, gills, hemocytes or ungrafted pearl pockets. Within the mantle, specifically expressed in mineralizing outer epithelium cells (at protein level). After secretion incorporated into acid-insoluble nacre matrix of shell and pearl (at protein level). Not found in acid-insoluble matrix of shell prisms (at protein level).

It localises to the secreted. This chain is Methionine-rich nacre protein, found in Margaritifera margaritifera (Freshwater pearl mussel).